The chain runs to 130 residues: MARVKRAVNAHKKRRVILERAAGYRGQRSRLYRKAKEQVTHSLVYAYRDRRAKKGEFRRLWIQRINAAARANGLTYNRLIQGLSLAGVQVDRRILAELAVHEPATFASLVQTAKTALPANTSAPKVAANA.

It belongs to the bacterial ribosomal protein bL20 family.

Binds directly to 23S ribosomal RNA and is necessary for the in vitro assembly process of the 50S ribosomal subunit. It is not involved in the protein synthesizing functions of that subunit. This chain is Large ribosomal subunit protein bL20, found in Clavibacter sepedonicus (Clavibacter michiganensis subsp. sepedonicus).